Consider the following 78-residue polypeptide: Acyl carrier protein (78 aa).

Residues 2–77 (STIEERVKKI…AAIDYVNSHQ (76 aa)) form the Carrier domain. Serine 37 is subject to O-(pantetheine 4'-phosphoryl)serine.

It belongs to the acyl carrier protein (ACP) family. Post-translationally, 4'-phosphopantetheine is transferred from CoA to a specific serine of apo-ACP by AcpS. This modification is essential for activity because fatty acids are bound in thioester linkage to the sulfhydryl of the prosthetic group.

It is found in the cytoplasm. It participates in lipid metabolism; fatty acid biosynthesis. Its function is as follows. Carrier of the growing fatty acid chain in fatty acid biosynthesis. In Pseudomonas putida (strain W619), this protein is Acyl carrier protein.